Here is a 216-residue protein sequence, read N- to C-terminus: Large ribosomal subunit protein uL3 (216 aa).

The tract at residues 132–157 (FRGQGASHGTQAVHRKPGSIGGCATP) is disordered.

This sequence belongs to the universal ribosomal protein uL3 family. As to quaternary structure, part of the 50S ribosomal subunit. Forms a cluster with proteins L14 and L19.

Its function is as follows. One of the primary rRNA binding proteins, it binds directly near the 3'-end of the 23S rRNA, where it nucleates assembly of the 50S subunit. The sequence is that of Large ribosomal subunit protein uL3 from Saccharopolyspora erythraea (strain ATCC 11635 / DSM 40517 / JCM 4748 / NBRC 13426 / NCIMB 8594 / NRRL 2338).